The sequence spans 312 residues: Cytochrome f (312 aa).

An N-terminal signal peptide occupies residues 1–28 (MQISKFFKFVFISVSLCGSLLFPQMANA). Residues Tyr29, Cys49, Cys52, and His53 each coordinate heme. Residues 278–298 (VKGMIAFFFTVTVAQILLVLK) traverse the membrane as a helical segment.

This sequence belongs to the cytochrome f family. The 4 large subunits of the cytochrome b6-f complex are cytochrome b6, subunit IV (17 kDa polypeptide, petD), cytochrome f and the Rieske protein, while the 4 small subunits are PetG, PetL, PetM and PetN. The complex functions as a dimer. Heme is required as a cofactor.

It localises to the plastid. The protein localises to the chloroplast thylakoid membrane. Functionally, component of the cytochrome b6-f complex, which mediates electron transfer between photosystem II (PSII) and photosystem I (PSI), cyclic electron flow around PSI, and state transitions. The chain is Cytochrome f from Emiliania huxleyi (Coccolithophore).